The primary structure comprises 195 residues: dCTP deaminase (195 aa).

DCTP is bound by residues 110 to 115, aspartate 128, 136 to 138, tyrosine 171, lysine 178, and glutamine 182; these read RSSLAR and VLE. The active-site Proton donor/acceptor is glutamate 138. The span at 169 to 179 shows a compositional bias: basic and acidic residues; the sequence is RPYSSRKDAKY. A disordered region spans residues 169 to 195; it reads RPYSSRKDAKYKNQQSAVASRIDEDKE.

This sequence belongs to the dCTP deaminase family. As to quaternary structure, homotrimer.

The enzyme catalyses dCTP + H2O + H(+) = dUTP + NH4(+). It participates in pyrimidine metabolism; dUMP biosynthesis; dUMP from dCTP (dUTP route): step 1/2. Functionally, catalyzes the deamination of dCTP to dUTP. The chain is dCTP deaminase from Haemophilus influenzae (strain 86-028NP).